A 4687-amino-acid chain; its full sequence is Plectin (4687 aa).

The segment at 1 to 1473 (MVAGMLMPLD…SELTTLTSQY (1473 aa)) is globular 1. R21 carries the post-translational modification Phosphoserine. Phosphotyrosine is present on V26. Positions 111 to 158 (RRRSPHVQTMQGPLGCPPKRGPLPAEDPAREERQVYRRKEREEGAPET) are disordered. Basic and acidic residues predominate over residues 137 to 154 (DPAREERQVYRRKEREEG). The tract at residues 181-406 (DERDRVQKKT…YVSSLYDAMP (226 aa)) is actin-binding. Calponin-homology (CH) domains follow at residues 185-288 (RVQK…LHFK) and 301-406 (MTAK…DAMP). The Spectrin 1 repeat unit spans residues 648 to 722 (LQSTQRRPEL…ERARNDESQL (75 aa)). A Phosphoserine modification is found at S723. Spectrin repeat units follow at residues 743–827 (KLLN…REDH) and 840–933 (LQTQ…AIVQ). Phosphothreonine is present on T818. The SH3 domain occupies 944–1001 (RGHVPLLAVCDYKQVEVTVHKGDQCQLVGPAQPFHWKVLSSSGSEAAVPSVCFLVPPP). Position 1050 is a phosphoserine (S1050). The Spectrin 4 repeat unit spans residues 1318–1418 (RERVTQLLER…QKFAKQYINA (101 aa)). Phosphoserine is present on S1438. 2 coiled-coil regions span residues 1472 to 1692 (QYIK…ERWL) and 1724 to 2760 (SFAE…TSQA). A central fibrous rod domain region spans residues 1474-2758 (IKFISETLRR…LAHSEEIATS (1285 aa)). The segment at 1623 to 1647 (EEAEAQKRQAQEEAERLRRQVQDES) is disordered. A Phosphoserine modification is found at S1724. K1728 is modified (N6-acetyllysine). Disordered regions lie at residues 1741–1764 (VTVT…ERAR), 1796–1846 (SLAQ…GTAQ), 2096–2139 (EDTM…AEEE), 2164–2188 (LRER…KRLQ), and 2218–2307 (RLRS…DAEM). Basic and acidic residues-rich tracts occupy residues 1801-1839 (DAEK…KQRQ), 2096-2111 (EDTM…EAAR), and 2119-2131 (EEQR…ERVQ). The span at 2173-2182 (ARQLQLAQEA) shows a compositional bias: low complexity. The span at 2218 to 2261 (RLRSEAEAARRAAEEAEEAREQAEREAAQSRKQVEEAERLKQSA) shows a compositional bias: basic and acidic residues. Residues 2262-2275 (EEQAQAQAQAQAAA) show a composition bias toward low complexity. The span at 2276-2291 (EKLRKEAEQEAARRAQ) shows a compositional bias: basic and acidic residues. A Phosphoserine modification is found at S2634. K2639 is modified (N6-acetyllysine). The segment at 2671 to 2710 (QEEQQRQQQQMEQEKQELVASMEEARRRQREAEEGVRRKQ) is disordered. Basic and acidic residues predominate over residues 2682-2710 (EQEKQELVASMEEARRRQREAEEGVRRKQ). The segment at 2759–4687 (QAAATKALPN…SLGGPESAVA (1929 aa)) is globular 2. S2777 carries the post-translational modification Phosphoserine. Y2784 carries the phosphotyrosine modification. 6 Plectin repeats span residues 2791 to 2828 (QKVP…REDV), 2829 to 2866 (RHYL…PGTA), 2867 to 2904 (LILL…PELH), 2905 to 2942 (HKLL…RDHG), 2943 to 2980 (IRLL…EEMN), and 2984 to 3018 (ADPS…PETG). S2805 carries the phosphoserine modification. The residue at position 2889 (T2889) is a Phosphothreonine. Y3036 is subject to Phosphotyrosine. An N6-acetyllysine mark is found at K3056 and K3094. Plectin repeat units follow at residues 3119–3156 (ALVP…ADEV), 3157–3194 (RQAL…PEVA), 3195–3232 (VALL…PEMH), 3233–3270 (EKLL…REQG), 3271–3308 (LRLL…KETN), and 3311–3346 (LTSP…QLTG). Phosphotyrosine is present on Y3365. K3423 carries the post-translational modification N6-acetyllysine. Plectin repeat units lie at residues 3488 to 3525 (RTLL…ASTA), 3526 to 3563 (TLLL…PELH), 3564 to 3601 (EKLL…RDHA), 3602 to 3639 (IRLL…EEMN), and 3643 to 3677 (ADPS…PETG). At S3583 the chain carries Phosphoserine. Residue T3788 is modified to Phosphothreonine. Y3793 is subject to Phosphotyrosine. 5 Plectin repeats span residues 3823–3860 (WRYL…AEVA), 3861–3898 (RLLL…PELH), 3899–3936 (DRLL…AEEA), 3937–3974 (LRLL…KDTH), and 3978–4011 (SEPS…DNSG). T4033 is modified (phosphothreonine). Phosphoserine is present on S4057. Plectin repeat units lie at residues 4066–4103 (QKFL…PGTA), 4104–4141 (FELL…PEFK), 4142–4179 (DKLL…KDHG), 4180–4217 (IRLL…EEMN), 4221–4255 (TDPS…PQTG), and 4268–4308 (RKTS…HQTY). The binding to intermediate filaments stretch occupies residues 4253–4303 (QTGLCLLPLKEKKRERKTSSKSSVRKRRVVIVDPETGKEMSVYEAYRKGLI). A phosphoserine mark is found at S4385, S4387, S4388, S4389, S4392, S4393, S4394, and S4395. Y4396 bears the Phosphotyrosine mark. Phosphoserine occurs at positions 4399 and 4409. Plectin repeat units follow at residues 4411-4448 (SDPT…NITG), 4449-4486 (QRLL…KIMV), 4487-4524 (DRIN…YEAG), 4525-4562 (QRFL…ARTA), and 4563-4600 (QKLR…EGTG). The residue at position 4414 (T4414) is a Phosphothreonine. The residue at position 4542 (T4542) is a Phosphothreonine; by CDK1. Phosphoserine is present on residues S4610 and S4616. Residues 4614-4674 (YYSPYSVSGS…SGYGRRYASG (61 aa)) are compositionally biased toward low complexity. The tract at residues 4614-4687 (YYSPYSVSGS…SLGGPESAVA (74 aa)) is disordered. Position 4618 is a phosphotyrosine (Y4618). S4619, S4621, and S4625 each carry phosphoserine. T4626 is subject to Phosphothreonine. A 4 X 4 AA tandem repeats of G-S-R-X region spans residues 4628–4643 (GSRTGSRTGSRAGSRR). A Phosphoserine modification is found at S4629. An omega-N-methylarginine mark is found at R4630 and R4643. Residues S4645 and S4678 each carry the phosphoserine modification.

The protein belongs to the plakin or cytolinker family. As to quaternary structure, homodimer or homotetramer. Interacts (via actin-binding domain) with SYNE3. Interacts (via calponin-homology (CH) 1 domain) with VIM (via rod region). Interacts (via N-terminus) with DST isoform 2 (via N-terminus). Interacts with FER. Interacts with TOR1A. Interacts with ANK3. Identified in complexes that contain VIM, EZR, AHNAK, BFSP1, BFSP2, ANK2, PLEC, PRX and spectrin. Phosphorylated by CDK1; regulates dissociation from intermediate filaments during mitosis. Isoform 2 is phosphorylated on Ser-21 and Tyr-26. As to expression, widely expressed with highest expression in skeletal muscle and lowest in thymus.

The protein resides in the cytoplasm. Its subcellular location is the cytoskeleton. It is found in the cell junction. The protein localises to the hemidesmosome. It localises to the cell projection. The protein resides in the podosome. In terms of biological role, interlinks intermediate filaments with microtubules and microfilaments and anchors intermediate filaments to desmosomes or hemidesmosomes. May be involved not only in the cross-linking and stabilization of cytoskeletal intermediate filaments network, but also in the regulation of their dynamics. In Rattus norvegicus (Rat), this protein is Plectin (Plec).